A 435-amino-acid chain; its full sequence is Ribosomal protein uS12 methylthiotransferase RimO (435 aa).

The MTTase N-terminal domain occupies 3-113 (HKVGFVSLGC…VVNAVHQYLP (111 aa)). Cysteine 12, cysteine 48, cysteine 77, cysteine 144, cysteine 148, and cysteine 151 together coordinate [4Fe-4S] cluster. A Radical SAM core domain is found at 130–367 (LTPRHYAYLK…MQVQAEISRN (238 aa)). In terms of domain architecture, TRAM spans 370–435 (KNKIGSTQTV…DDYDLYASLV (66 aa)).

Belongs to the methylthiotransferase family. RimO subfamily. The cofactor is [4Fe-4S] cluster.

The protein resides in the cytoplasm. The enzyme catalyses L-aspartate(89)-[ribosomal protein uS12]-hydrogen + (sulfur carrier)-SH + AH2 + 2 S-adenosyl-L-methionine = 3-methylsulfanyl-L-aspartate(89)-[ribosomal protein uS12]-hydrogen + (sulfur carrier)-H + 5'-deoxyadenosine + L-methionine + A + S-adenosyl-L-homocysteine + 2 H(+). Functionally, catalyzes the methylthiolation of an aspartic acid residue of ribosomal protein uS12. This is Ribosomal protein uS12 methylthiotransferase RimO from Legionella pneumophila subsp. pneumophila (strain Philadelphia 1 / ATCC 33152 / DSM 7513).